A 70-amino-acid chain; its full sequence is Antimicrobial peptide VpCT1 (70 aa).

Positions 1-23 (MKNQFAVLLVALVLLQLFSQSEA) are cleaved as a signal peptide. Leu-36 carries the leucine amide modification. A propeptide spanning residues 37–70 (GKRGLRNFDLEQMDDTYEPELSEADLRYLQDLLR) is cleaved from the precursor.

This sequence belongs to the non-disulfide-bridged peptide (NDBP) superfamily. Short antimicrobial peptide (group 4) family. In terms of tissue distribution, expressed by the venom gland.

The protein resides in the secreted. Its subcellular location is the target cell membrane. In terms of biological role, antimicrobial peptide with potent activity against bacteria S.aureus (MIC=4.7 uM) and E.coli (MIC=31.5 uM), and pathogenic yeasts C.albicans (MIC=25 uM) and C.glabrata (MIC=12.5 uM). Is not very effective against P.aeruginosa (MIC=150 and &gt;300 uM). Also provokes moderate hemolysis on human erythrocytes (HC(50)=10.5 uM). In Mesomexovis punctatus (Scorpion), this protein is Antimicrobial peptide VpCT1.